We begin with the raw amino-acid sequence, 133 residues long: Putative elongation factor 1-delta-like protein (133 aa).

A compositionally biased stretch (low complexity) spans 58 to 73; that stretch reads SLAGSLGPGASSGPSG. Disordered stretches follow at residues 58-77 and 89-133; these read SLAG…DHSE and NQRD…TSRG. Over residues 89–102 the composition is skewed to basic and acidic residues; sequence NQRDLAERAGEELA.

The protein belongs to the EF-1-beta/EF-1-delta family.

This is Putative elongation factor 1-delta-like protein (EEF1DP3) from Homo sapiens (Human).